A 629-amino-acid chain; its full sequence is MNLCSSGATASTTSLSSTGQRNGGTSEGGGEGAGGGGGSGGGGGNSSNDGPSEAIHCFGSNGGGGGPEEVFHTSHSHSTANGGGGGGSSNGHSQQHNENNATMPPETRPKMVTVKHPESNKPKPTTKKSKPIQADQDVIKALQRCRDEGIKRLDLSKSSITVIPSTVKECVHLTELYLYSNKIGQLPAEIGCLVNLRNLALNENSLTSLPESLQNCKQLKVLDLRHNKLAEIPPVIYRLRTLTTLYLRFNRITAVADNLRQLVNLTMLSLRENKIRELGSAIGALVNLTTLDVSHNHLEHLPEDIGNCVNLSALDLQHNELLDIPDSIGNLKSLVRLGLRYNRLSSVPATLKNCKSMDEFNVEGNGMTQLPDGMLASLSGLTTITLSRNQFTSYPTGGPAQFTNVYSINLEHNRIDKIPYGIFSRAKGLTKLNMKENMLTALPLDIGTWVNMVELNLATNALQKLPDDIMNLQNLEILILSNNMLKKIPNTIGNMRKLRILDLEENRIEVLPHEIGLLHELQRLILQTNQITMLPRSIGHLSNLTHLSVSENNLQFLPEEIGSLEGLENLYINQNPGLEKLPFELALCQNLKYLNIDKCPLSTIPPEIQAGGPSLVLQWLKMHSPYRQM.

The segment covering M1–G19 has biased composition (low complexity). The interval M1–Q133 is disordered. Positions R21–N45 are enriched in gly residues. 20 LRR repeats span residues G149 to C170, H172 to L193, N195 to K217, Q218 to L239, T241 to L262, N264 to L285, N287 to C308, N310 to L331, S333 to K355, S356 to S377, G380 to Q401, N404 to R425, G428 to W449, N451 to L472, N474 to M495, K497 to L518, E520 to L541, N543 to L564, G566 to C588, and N590 to G611.

The protein belongs to the SHOC2 family.

In terms of biological role, acts as a Ras effector and participates in MAPK pathway activation. Probably acts as a regulatory subunit of protein phosphatase that specifically dephosphorylates Raf kinase and stimulate Raf activity at specialized signaling complexes upon Ras activation. In Drosophila pseudoobscura pseudoobscura (Fruit fly), this protein is Leucine-rich repeat protein soc-2 homolog (Sur-8).